Consider the following 168-residue polypeptide: Protein-export protein SecB (168 aa).

Belongs to the SecB family. Homotetramer, a dimer of dimers. One homotetramer interacts with 1 SecA dimer.

It is found in the cytoplasm. In terms of biological role, one of the proteins required for the normal export of preproteins out of the cell cytoplasm. It is a molecular chaperone that binds to a subset of precursor proteins, maintaining them in a translocation-competent state. It also specifically binds to its receptor SecA. The chain is Protein-export protein SecB from Thioalkalivibrio sulfidiphilus (strain HL-EbGR7).